A 1392-amino-acid chain; its full sequence is MTMSQTDGVEFASRNTNENGHDDDDQLRSQWVAIERSPTFERITTALFCKRDEKGKKSQRRVMDVSKLDDLDRRLFIDDLIRHVENDNHVLLQKIRKRIDEVGIDLPKIEARFSDLFVEAECEVVYGKPIPTLWNAISSKLSRFMCSNQAKKISILKGVSGIIRPKRMTLLLGPPSCGKTTLLLALSGRLDPSLKTRGDISYNGHLFSEFVPEKTSSYVSQNDLHIPELSVRETLDFSGCFQGTGSRLEMTKEISRREKLKGIVPDPDIDAYMKAASIEGSKTNLQTDYILKILGLTICADTRVGDASRPGISGGQKRRLTTGEMIVGPIKTLFMDEISNGLDSSTTFQILSCLQQFARLSEGTILVSLLQPAPETFELFDDLILMGEGKIIYHGPRDFVCSFFEDCGFKCPNRKSVAEFLQEVISRKDQEQYWCHIEKTYCYVSIESFIEKFKKSDLGLELQDRLSKTYDKSQTQKDGLCFRKYSLSNWDMLKACSRREFLLMKRNSFVYVFKSGLLIFIGFIAMTVYLRTGSTRDSLHANYLMGSLFFSLFKLLADGLPELTLTISRIAVFCKQKELYFYPAWAYAIPSAILKIPISFLESFLWTMLTYYVIGYSPEMGRFIRQFLILFALHLSCISMFRAIAAVFRDFVVATTVGSISIVLLSVFGGFIVRKPSMPSWLEWGFWLSPLSYAEIGLTANEFFAPRWGKITSENRTLGEQVLDARGLNFGNQSYWNAFGALIGFTLFFNTVFALALTFLKTSQRSRVIVSHEKNTQSSENDSKIASRFKNALPFEPLTFTFQDVQYIIETPQGKKLQLLSGVTGAFKPGVLTALMGVSGAGKTTLLDVLSGRKTFGDIKGQIEVGGYVKVQDTFSRVSGYCEQFDIHSPNLTVQESLKYSAWLRLTSNISSETKCAIVNEVLETIELEEIKDSIVGIPGISGLTTEQRKRLTIAVELVSNPSIIFMDEPTTGLDARAAAIVMRAVKNIAETGRTVVCTIHQPSIDIFEAFDELILMKNGGKIIYYGPLGQHSSKVIEYFMRIHGVPKLKENSNPATWILDITSKSSEDKLGVDLAQMYEESTLFKENKMVIEQTRCTSLGSERLILSSRYAQTSWEQFKACLWKQHLSYWRNPSYNLTRIIFMSFTCMLCGILFWQKAKEINNQQDLFNVFGSMFTVVLFSGINNCSTVLFSVATERNVFYRERFSRMYNSWAYSLAQVLVEIPYSLFQSIVYVIIVYPMVGYHWSVFKVFWSFYSIFCTLLIFNYFGMLLVVVTPNVHIAFTLRSSFYAIVNLFAGYVMPKPNIPRWWIWMYYLSPTSWVLNGLLTSQYGDMEKEILAFGEKKKVSDFLEDYFGYRYDSLALVAVVLIAFPILLASLFAFFIGKLNFQKK.

Positions Met-1–Glu-18 are enriched in polar residues. Positions Met-1–Gln-26 are disordered. Residues Ser-139–Asn-413 enclose the ABC transporter 1 domain. Gly-173–Thr-180 lines the ATP pocket. The ABC transmembrane type-2 1 domain maps to Asp-491–Phe-703. 6 helical membrane-spanning segments follow: residues Phe-509–Tyr-529, Tyr-543–Leu-563, Ile-596–Tyr-616, Phe-627–Val-647, Val-652–Ile-672, and Phe-739–Phe-759. Residues Phe-800 to Gly-1045 enclose the ABC transporter 2 domain. Gly-837 to Thr-844 lines the ATP pocket. In terms of domain architecture, ABC transmembrane type-2 2 spans Glu-1117–Tyr-1331. 7 consecutive transmembrane segments (helical) span residues Tyr-1136–Trp-1156, Met-1175–Ala-1195, Tyr-1215–Ile-1237, Phe-1255–Val-1275, Ile-1281–Met-1301, Trp-1309–Ser-1329, and Leu-1364–Ile-1384.

The protein belongs to the ABC transporter superfamily. ABCG family. PDR (TC 3.A.1.205) subfamily. Confined to shoots.

The protein localises to the membrane. Its function is as follows. May be a general defense protein. This Arabidopsis thaliana (Mouse-ear cress) protein is ABC transporter G family member 42 (ABCG42).